Reading from the N-terminus, the 586-residue chain is Monoterpene synthase TPS4, chloroplastic (586 aa).

A chloroplast-targeting transit peptide spans 1–47 (MAATRNLSLLAQSSQPWAGIYGSHGSPRPISSWLRRQSIAKTSYICM). Positions 340, 344, 485, 489, and 493 each coordinate Mg(2+). A DDXXD motif motif is present at residues 340–344 (DDIFD).

This sequence belongs to the terpene synthase family. Tpsg subfamily. As to quaternary structure, monomer. Mg(2+) serves as cofactor.

The protein localises to the plastid. It localises to the chloroplast. It carries out the reaction (2E)-geranyl diphosphate + H2O = (2E)-geraniol + diphosphate. It functions in the pathway secondary metabolite biosynthesis; terpenoid biosynthesis. In terms of biological role, monoterpene synthase involved in the biosynthesis of volatile organic compounds. Mediates the conversion of (2E)-geranyl diphosphate (GPP) into the acyclic monoterpene, geraniol. Does not use (2E,6E)-farnesyl diphosphate (FPP) as substrate. This Cananga odorata (Ylang-ylang tree) protein is Monoterpene synthase TPS4, chloroplastic.